The following is a 539-amino-acid chain: MIO-dependent tyrosine 2,3-aminomutase (539 aa).

Y63 serves as the catalytic Proton donor/acceptor. H93 serves as a coordination point for substrate. The 5-imidazolinone (Ala-Gly) cross-link spans 152 to 154 (ASG). The residue at position 153 (S153) is a 2,3-didehydroalanine (Ser). The substrate site is built by N205 and R311.

This sequence belongs to the TAL/TAM family. As to quaternary structure, homotetramer; dimer of dimers. Post-translationally, contains an active site 4-methylidene-imidazol-5-one (MIO), which is formed autocatalytically by cyclization and dehydration of residues Ala-Ser-Gly.

It catalyses the reaction L-tyrosine = 3-amino-3-(4-hydroxyphenyl)propanoate. The catalysed reaction is L-tyrosine = (E)-4-coumarate + NH4(+). In terms of biological role, involved in the biosynthesis of the enediyne antitumor antibiotic C-1027. Catalyzes the MIO-dependent deamination of L-tyrosine generating the corresponding alpha,beta-unsaturated acid, (S)-beta-tyrosine. The polypeptide is MIO-dependent tyrosine 2,3-aminomutase (Streptomyces globisporus).